The primary structure comprises 243 residues: Probable transcriptional regulatory protein Ldb0677 (243 aa).

Residues 1–22 (MSGHSKWHNIQGRKNAQDAKRG) are disordered.

This sequence belongs to the TACO1 family.

The protein localises to the cytoplasm. This Lactobacillus delbrueckii subsp. bulgaricus (strain ATCC 11842 / DSM 20081 / BCRC 10696 / JCM 1002 / NBRC 13953 / NCIMB 11778 / NCTC 12712 / WDCM 00102 / Lb 14) protein is Probable transcriptional regulatory protein Ldb0677.